Consider the following 245-residue polypeptide: Thiopurine S-methyltransferase (245 aa).

29 to 40 lines the S-adenosyl-L-methionine pocket; the sequence is WREKWVDGKIGF. Phe-40 contributes to the substrate binding site. At Lys-58 the chain carries N6-acetyllysine. Residues Leu-69, Glu-90, and Arg-152 each coordinate S-adenosyl-L-methionine.

This sequence belongs to the class I-like SAM-binding methyltransferase superfamily. TPMT family. In terms of assembly, monomer.

The protein localises to the cytoplasm. The enzyme catalyses S-adenosyl-L-methionine + a thiopurine = S-adenosyl-L-homocysteine + a thiopurine S-methylether.. The chain is Thiopurine S-methyltransferase (TPMT) from Panthera leo (Lion).